Reading from the N-terminus, the 137-residue chain is Large ribosomal subunit protein uL16 (137 aa).

The protein belongs to the universal ribosomal protein uL16 family. Part of the 50S ribosomal subunit.

Binds 23S rRNA and is also seen to make contacts with the A and possibly P site tRNAs. This chain is Large ribosomal subunit protein uL16, found in Afipia carboxidovorans (strain ATCC 49405 / DSM 1227 / KCTC 32145 / OM5) (Oligotropha carboxidovorans).